Here is a 364-residue protein sequence, read N- to C-terminus: Flagellar P-ring protein (364 aa).

Residues 1–29 (MKTIGGKVFRHAAILAACVLPLWCQPALA) form the signal peptide.

It belongs to the FlgI family. As to quaternary structure, the basal body constitutes a major portion of the flagellar organelle and consists of four rings (L,P,S, and M) mounted on a central rod.

The protein localises to the periplasm. It localises to the bacterial flagellum basal body. In terms of biological role, assembles around the rod to form the L-ring and probably protects the motor/basal body from shearing forces during rotation. In Dechloromonas aromatica (strain RCB), this protein is Flagellar P-ring protein.